A 20-amino-acid chain; its full sequence is Equinatoxin-1 (20 aa).

Residues 3–12 (AVAGAVIEGA) form a plays an important role in the hemolytic activity region. The segment at 11–20 (GASLTFNVLQ) is N-terminal region.

Belongs to the actinoporin family. Sea anemone subfamily. As to quaternary structure, octamer or nonamer in membranes. Monomer in the soluble state.

The protein resides in the secreted. It is found in the nematocyst. It localises to the target cell membrane. In terms of biological role, pore-forming protein that forms cations-selective hydrophilic pores of around 1 nm and causes cardiac stimulation and cytolysis. Pore formation is a multi-step process that involves specific recognition of membrane sphingomyelin (but neither cholesterol nor phosphatidylcholine) using aromatic rich region and adjacent phosphocholine (POC) binding site, firm binding to the membrane (mainly driven by hydrophobic interactions) accompanied by the transfer of the N-terminal region to the lipid-water interface and finally pore formation after oligomerization of monomers. Cytolytic effects include red blood cells hemolysis, platelet aggregation and lysis, cytotoxic and cytostatic effects on fibroblasts. Lethality in mammals has been ascribed to severe vasospasm of coronary vessels, cardiac arrhythmia, and inotropic effects. This is Equinatoxin-1 from Actinia equina (Beadlet anemone).